Reading from the N-terminus, the 388-residue chain is Beta-hexosaminidase LpqI (388 aa).

Residues 1 to 19 form the signal peptide; it reads MAFPRTLAILAAAAALVVA. Cys-20 is lipidated: N-palmitoyl cysteine. Cys-20 carries S-diacylglycerol cysteine lipidation. Substrate-binding positions include Asp-123, Arg-131, Arg-193, and 223–224; that span reads KH. Catalysis depends on His-236, which acts as the Proton donor/acceptor. Catalysis depends on Asp-311, which acts as the Nucleophile.

It belongs to the glycosyl hydrolase 3 family.

It localises to the cell inner membrane. The enzyme catalyses Hydrolysis of terminal non-reducing N-acetyl-D-hexosamine residues in N-acetyl-beta-D-hexosaminides.. Its pathway is cell wall biogenesis; peptidoglycan recycling. Functionally, plays a role in peptidoglycan recycling by cleaving the terminal beta-1,4-linked N-acetylglucosamine (GlcNAc) from peptidoglycan fragments. Acts as a regulator for GlcNAc-MurNAc levels by cleaving disaccharides and allowing the breakdown of MurNAc. The chain is Beta-hexosaminidase LpqI from Mycobacterium bovis (strain BCG / Pasteur 1173P2).